The following is a 982-amino-acid chain: Hunchback-like protein (982 aa).

The tract at residues 87–194 is disordered; sequence QPGEKIHPDG…SNYQVTSEPV (108 aa). The span at 101 to 110 shows a compositional bias: basic and acidic residues; the sequence is PKEDGRKSSE. Positions 111–132 are enriched in polar residues; that stretch reads HTNSYDVSASQSPSNDGAQSDS. Positions 142-152 are enriched in acidic residues; that stretch reads CMTETEMDTDE. Basic and acidic residues predominate over residues 153 to 175; that stretch reads KDSTIKPEDQATPKLEEGSDSKP. The segment covering 176 to 193 has biased composition (polar residues); sequence ESTSVEGTSSNYQVTSEP. 7 consecutive C2H2-type zinc fingers follow at residues 336–358, 361–384, 538–560, 567–589, 595–617, 623–647, and 734–756; these read LVCPICGFMCPSKFHFNSHMNTH, HQCSMCDYTSRTEGRLKKHMRESH, FKCKQCGHQSLSKDDQWAHARTH, LNCQHCNFVTEYKHHLEYHYRNH, FQCKKCAYNCVNKSMLNSHMKSH, FRCMDCTYATKYCHSLKLHLKKYNH, and LKCSACDFVASSADEKMRHSMSH. The segment at 377 to 415 is disordered; it reads KKHMRESHTVEEQLRAGFESEPAKESASSPKNLSLSKDG. The segment at 811-896 is disordered; the sequence is EEMDQGSDSA…PPLHSSSIVA (86 aa). Composition is skewed to polar residues over residues 816–831 and 843–862; these read GSDSAVSPTGSSQISS and SLEQISARANGNNSPMSNDS. A compositionally biased stretch (basic and acidic residues) spans 863–875; the sequence is AMEKDGESADDAP. 2 C2H2-type zinc fingers span residues 929-951 and 957-981; these read FYCDHCKIPFDTQQVLDSHMRFH and FMCSDCQYQAFNELSFALHMYQARH.

Belongs to the hunchback C2H2-type zinc-finger protein family. Expressed primarily in ectodermal cells during embryonic and larval development.

It localises to the nucleus. In terms of biological role, required for the late stages of development. Plays a role in the developmental timing of postembryonic hypodermal seam cell fusion events and adult alae production. The chain is Hunchback-like protein from Caenorhabditis elegans.